The sequence spans 292 residues: Short chain dehydrogenase/reductase CPUR_05418 (292 aa).

2 residues coordinate NADP(+): isoleucine 44 and arginine 156. Active-site proton donor residues include serine 172 and tyrosine 186. Residues tyrosine 186, lysine 190, isoleucine 221, and threonine 223 each coordinate NADP(+). The active-site Lowers pKa of active site Tyr is the lysine 190.

Belongs to the short-chain dehydrogenases/reductases (SDR) family.

Its pathway is secondary metabolite biosynthesis. Its function is as follows. Short chain dehydrogenase/reductase; part of the ergochrome gene cluster responsible for the typical purple-black color of the ergot sclerotia. The ergochrome gene cluster produces several ergot pigments including the yellow ergochrome secalonic acid and its derivatives, as well as the red anthraquinones endocrocin and clavorubin. The pathway begins with the synthesis of atrochrysone thioester by the polyketide synthase (PKS) CPUR_05437. The atrochrysone carboxyl ACP thioesterase CPUR_05436 then breaks the thioester bond and releases the atrochrysone carboxylic acid from CPUR_05437. The atrochrysone carboxylic acid is then converted to atrochrysone which is further transformed into emodin anthrone. The next step is performed by the anthrone oxygenase CPUR_05434 that catalyzes the oxidation of emodinanthrone to emodin. Emodin is further modified to yield monodictyphenone via several steps involving CPUR_05427, CPUR_05428, CPUR_05429 and CPUR_05430. The short chain dehydrogenase/reductase CPUR_05418 then catalyzes the C-5 ketoreduction to give the xanthone skeleton of the monomeric units. Ergochromes formation requires further dimerization steps of different xanthone units, probably catalyzed by the cytochrome P450 monooxygenase CPUR_05419. CPUR_05425, CPUR_05426 and CPUR_05431 are unique to Claviceps, thus it is likely that they are involved in further modification of xanthone units or in their dimerization. The yellow ergochromes and the red anthraquinone pigments endocrocin and clavorubin are products from the same PKS derived precursors and the latter are likely shunt products in the pathway of xanthone biosynthesis. It is proposed that atrochrysone carboxylic acid released from the PKS CPUR_05437 can also be converted to endocrocin anthrone which is further oxidized into endocrocin by CPUR_05435. Endocrocin could be then modified to clavorubin, possibly by CPUR_05423 and CPUR_05431. Clavorubin is the principal anthraquinone metabolite produced by the cluster with a much higher yield compared to endocrocin. This Claviceps purpurea (strain 20.1) (Ergot fungus) protein is Short chain dehydrogenase/reductase CPUR_05418.